A 109-amino-acid chain; its full sequence is Transcription initiation factor IIA subunit 2 (109 aa).

It belongs to the TFIIA subunit 2 family. In terms of assembly, TFIIA is a heterodimer of the large unprocessed subunit 1 and a small subunit gamma. It was originally believed to be a heterotrimer of an alpha (p35), a beta (p19) and a gamma subunit (p12). Interacts with NCOA6 general coactivator. TFIIA forms a complex with TBP. Interacts with HSF1 (via transactivation domain). Part of TBP-based Pol II pre-initiation complex (PIC), in which Pol II core assembles with general transcription factors and other specific initiation factors including GTF2E1, GTF2E2, GTF2F1, GTF2F2, TCEA1, ERCC2, ERCC3, GTF2H2, GTF2H3, GTF2H4, GTF2H5, GTF2A1, GTF2A2, GTF2B and TBP; this large multi-subunit PIC complex mediates DNA unwinding and targets Pol II core to the transcription start site where the first phosphodiester bond forms.

It is found in the nucleus. In terms of biological role, TFIIA is a component of the transcription machinery of RNA polymerase II and plays an important role in transcriptional activation. TFIIA in a complex with TBP mediates transcriptional activity. The sequence is that of Transcription initiation factor IIA subunit 2 (Gtf2a2) from Rattus norvegicus (Rat).